The sequence spans 113 residues: Protein crumbs homolog 3 (113 aa).

The first 24 residues, methionine 1–threonine 24, serve as a signal peptide directing secretion. The tract at residues leucine 23–glycine 44 is disordered. The Extracellular segment spans residues alanine 25 to alanine 49. Asparagine 31 carries an N-linked (GlcNAc...) asparagine glycan. The helical transmembrane segment at isoleucine 50–phenylalanine 70 threads the bilayer. Topologically, residues leucine 71–isoleucine 113 are cytoplasmic. Positions arginine 77 to isoleucine 113 are interaction with EPB41L5. The disordered stretch occupies residues arginine 80–isoleucine 113. A compositionally biased stretch (polar residues) spans glutamate 83 to glutamate 92. Positions glutamate 110 to isoleucine 113 match the PDZ-binding motif.

Component of a complex composed of CRB3, PALS1 and PATJ. Interacts (via C-terminus) with PALS1 (via PDZ domain). Interacts with PARD6A. Interacts (via intracellular domain) with EPB41L5. Interacts with WDR83. Expressed in the apical renal tubules (at protein level). Expressed in the retinal pigment epithelium.

The protein resides in the apical cell membrane. Its subcellular location is the cell junction. The protein localises to the tight junction. Functionally, involved in the establishment of cell polarity in mammalian epithelial cells. Regulates the morphogenesis of tight junctions. Involved in promoting phosphorylation and cytoplasmic retention of transcriptional coactivators YAP1 and WWTR1/TAZ which leads to suppression of TGFB1-dependent transcription of target genes such as CCN2/CTGF, SERPINE1/PAI1, SNAI1/SNAIL1 and SMAD7. This is Protein crumbs homolog 3 (Crb3) from Mus musculus (Mouse).